An 87-amino-acid polypeptide reads, in one-letter code: KLWRMTGTWLGGFCHSIIQIPVIIQLPFCGPNVIDHYFRDLQPLFKLACTDTFMEGVIVLAFSGLFSVFSFLILVSSYIVILVNLRN.

Topologically, residues 1–8 (KLWRMTGT) are cytoplasmic. A helical transmembrane segment spans residues 9–29 (WLGGFCHSIIQIPVIIQLPFC). At 30–55 (GPNVIDHYFRDLQPLFKLACTDTFME) the chain is on the extracellular side. The chain crosses the membrane as a helical span at residues 56–76 (GVIVLAFSGLFSVFSFLILVS). Over 77 to 87 (SYIVILVNLRN) the chain is Cytoplasmic.

Belongs to the G-protein coupled receptor 1 family.

The protein resides in the cell membrane. Odorant receptor. The sequence is that of Olfactory receptor-like protein HbT2 from Apis mellifera ligustica (Common honeybee).